A 179-amino-acid polypeptide reads, in one-letter code: Plasmid-derived single-stranded DNA-binding protein (179 aa).

One can recognise an SSB domain in the interval 6 to 110 (INKVILVGRL…ILVKTTGTMQ (105 aa)). The DNA-binding element occupies 55–61 (WHRVVLF). A disordered region spans residues 117 to 179 (GAQTQPEEGQ…DYGFSDDIPF (63 aa)). Positions 118-132 (AQTQPEEGQQFSGQP) are enriched in polar residues. Residues 145–155 (GGAKTKGRGRK) show a composition bias toward basic residues. The segment covering 167-179 (EGDDYGFSDDIPF) has biased composition (acidic residues).

As to quaternary structure, homotetramer.

In terms of biological role, may contribute to the conjugative processing of DNA. It has a functional relationship with Psi (plasmid-mediated sos inhibition) proteins. This chain is Plasmid-derived single-stranded DNA-binding protein (ssbF), found in Escherichia coli (strain K12).